A 237-amino-acid polypeptide reads, in one-letter code: UPF0688 protein C1orf174 homolog (237 aa).

The disordered stretch occupies residues 1–187; that stretch reads MRSRKLAGGV…LLDDDSNQPM (187 aa). The span at 11 to 28 shows a compositional bias: low complexity; that stretch reads RSSARLRARSCSAASASA. Over residues 29-47 the composition is skewed to polar residues; sequence QDTHVTTSAQTACQTPSSH. Positions 48–76 are enriched in basic and acidic residues; the sequence is KATDRRTSKKFKYDKGHIVKSELQKHRSD. S183 is subject to Phosphoserine.

Belongs to the UPF0688 family.

It localises to the nucleus. This Bos taurus (Bovine) protein is UPF0688 protein C1orf174 homolog.